The chain runs to 580 residues: 2-succinyl-5-enolpyruvyl-6-hydroxy-3-cyclohexene-1-carboxylate synthase (580 aa).

This sequence belongs to the TPP enzyme family. MenD subfamily. In terms of assembly, homodimer. The cofactor is Mg(2+). Mn(2+) is required as a cofactor. Requires thiamine diphosphate as cofactor.

The enzyme catalyses isochorismate + 2-oxoglutarate + H(+) = 5-enolpyruvoyl-6-hydroxy-2-succinyl-cyclohex-3-ene-1-carboxylate + CO2. Its pathway is quinol/quinone metabolism; 1,4-dihydroxy-2-naphthoate biosynthesis; 1,4-dihydroxy-2-naphthoate from chorismate: step 2/7. It participates in quinol/quinone metabolism; menaquinone biosynthesis. Catalyzes the thiamine diphosphate-dependent decarboxylation of 2-oxoglutarate and the subsequent addition of the resulting succinic semialdehyde-thiamine pyrophosphate anion to isochorismate to yield 2-succinyl-5-enolpyruvyl-6-hydroxy-3-cyclohexene-1-carboxylate (SEPHCHC). This is 2-succinyl-5-enolpyruvyl-6-hydroxy-3-cyclohexene-1-carboxylate synthase from Listeria monocytogenes serotype 4b (strain F2365).